The chain runs to 147 residues: MADFDAVLKFWGPVEADYTSHGGLVLTRLFKEHPETQKLFPKFTGIAQADMAGNAAISAHGATVLKKLGELLKAKGNHAAILKPMANSHATKHKIPINNFKLISEIIVKVMQEKAGMDAGGQQALRNVMAAVIADLEANYKELGFSG.

One can recognise a Globin domain in the interval 2-141; the sequence is ADFDAVLKFW…VIADLEANYK (140 aa). Histidine 60 contributes to the nitrite binding site. Residue histidine 60 participates in O2 binding. Position 89 (histidine 89) interacts with heme b.

The protein belongs to the globin family. In terms of assembly, monomeric.

It localises to the cytoplasm. The protein localises to the sarcoplasm. It carries out the reaction Fe(III)-heme b-[protein] + nitric oxide + H2O = Fe(II)-heme b-[protein] + nitrite + 2 H(+). The catalysed reaction is H2O2 + AH2 = A + 2 H2O. In terms of biological role, monomeric heme protein which primary function is to store oxygen and facilitate its diffusion within muscle tissues. Reversibly binds oxygen through a pentacoordinated heme iron and enables its timely and efficient release as needed during periods of heightened demand. Depending on the oxidative conditions of tissues and cells, and in addition to its ability to bind oxygen, it also has a nitrite reductase activity whereby it regulates the production of bioactive nitric oxide. Under stress conditions, like hypoxia and anoxia, it also protects cells against reactive oxygen species thanks to its pseudoperoxidase activity. The chain is Myoglobin (mb) from Sarda chiliensis (Pacific bonito).